The sequence spans 84 residues: ATP synthase subunit c (84 aa).

The next 2 helical transmembrane spans lie at 8-28 (VAGM…GGGI) and 56-76 (IIGS…AILL).

Belongs to the ATPase C chain family. As to quaternary structure, F-type ATPases have 2 components, F(1) - the catalytic core - and F(0) - the membrane proton channel. F(1) has five subunits: alpha(3), beta(3), gamma(1), delta(1), epsilon(1). F(0) has three main subunits: a(1), b(2) and c(10-14). The alpha and beta chains form an alternating ring which encloses part of the gamma chain. F(1) is attached to F(0) by a central stalk formed by the gamma and epsilon chains, while a peripheral stalk is formed by the delta and b chains.

The protein localises to the cell membrane. F(1)F(0) ATP synthase produces ATP from ADP in the presence of a proton or sodium gradient. F-type ATPases consist of two structural domains, F(1) containing the extramembraneous catalytic core and F(0) containing the membrane proton channel, linked together by a central stalk and a peripheral stalk. During catalysis, ATP synthesis in the catalytic domain of F(1) is coupled via a rotary mechanism of the central stalk subunits to proton translocation. In terms of biological role, key component of the F(0) channel; it plays a direct role in translocation across the membrane. A homomeric c-ring of between 10-14 subunits forms the central stalk rotor element with the F(1) delta and epsilon subunits. In Clostridium novyi (strain NT), this protein is ATP synthase subunit c.